A 340-amino-acid chain; its full sequence is Adenosine kinase (340 aa).

Asp-292 is a catalytic residue.

This sequence belongs to the carbohydrate kinase PfkB family. The cofactor is Mg(2+).

The catalysed reaction is adenosine + ATP = AMP + ADP + H(+). It functions in the pathway purine metabolism; AMP biosynthesis via salvage pathway; AMP from adenosine: step 1/1. The protein is Adenosine kinase (ado1) of Schizosaccharomyces pombe (strain 972 / ATCC 24843) (Fission yeast).